The primary structure comprises 1032 residues: Tail tape measure protein gp18 (1032 aa).

Residues 131-178 (GVIKASQDLDKLQAKLDDATDAKERAKIMEQIKNLQASLGKEERKALD) are a coiled coil.

The protein localises to the virion. Functionally, serves as a base for tail tube protein polymerization and acts as a template for tail length determination. The sequence is that of Tail tape measure protein gp18 from Bacillus phage SPP1 (Bacteriophage SPP1).